Here is a 256-residue protein sequence, read N- to C-terminus: MTERLKLTGLVLRAVDYGESDRVVTLLTRERGKVSGFARGARASRRRFGGALEPFTLLVAEARERPGSDMLGLESVSVLRAHGGIRGELARIACAGYAAELSRELVRDHEPHAELLALLLEYLGALDAGPARPEGLRAFELGALRAAGLMPRVDACVACGGALGPEGRVRFDPGQGGVLCPPCAPAAAPGAPWVSIAAASALARLQAEGLAGASAALPPSVGREARDALAAFLEHHLGRRLAARRFLDEVGPLLGD.

The protein belongs to the RecO family.

Involved in DNA repair and RecF pathway recombination. The protein is DNA repair protein RecO of Anaeromyxobacter sp. (strain Fw109-5).